Reading from the N-terminus, the 432-residue chain is GRAM domain-containing protein 2B (432 aa).

M1 is subject to N-acetylmethionine. Disordered stretches follow at residues 1–61 (MTEL…SPDQ) and 74–106 (DGAS…SSQY). Composition is skewed to basic and acidic residues over residues 9–39 (EDTK…EEKK) and 81–99 (DKND…ERKK). Positions 110-177 (MHFHKLFLSV…FSVTLIKKTK (68 aa)) constitute a GRAM domain. Residues 220 to 233 (TSVGNSPNPSSAEN) are compositionally biased toward polar residues. Residues 220 to 239 (TSVGNSPNPSSAENSFRADR) form a disordered region. S225, S242, and S252 each carry phosphoserine. A disordered region spans residues 262 to 285 (RQDMEGYSSSGSQTPESENSRDFH). Polar residues predominate over residues 268–278 (YSSSGSQTPES).

This Homo sapiens (Human) protein is GRAM domain-containing protein 2B (GRAMD2B).